Here is a 363-residue protein sequence, read N- to C-terminus: Probable auxin efflux carrier component 5a (363 aa).

A run of 10 helical transmembrane segments spans residues 7–27 (VYKV…GYGS), 39–59 (CDAV…FEFT), 72–92 (VAAD…WARF), 103–123 (SITS…VPMA), 134–154 (LVVQ…LFVL), 222–242 (FVGI…PSAF), 246–266 (VLIM…LFMA), 281–301 (LGLV…SIAV), 307–327 (VLRV…FIFA), and 342–362 (IFGM…LELI).

The protein belongs to the auxin efflux carrier (TC 2.A.69.1) family. Expressed in leaves, shoot apex and panicles. Expressed in roots, stem bases, stems, leaves and young panicles.

The protein localises to the membrane. Its function is as follows. May act as a component of the auxin efflux carrier. The polypeptide is Probable auxin efflux carrier component 5a (Oryza sativa subsp. japonica (Rice)).